Reading from the N-terminus, the 1206-residue chain is Cilia- and flagella-associated protein 157 (1206 aa).

Disordered regions lie at residues 26–52, 79–109, 125–173, and 327–405; these read GGGGGSAAAAAMQEEQGEQEGPTGRDL, RAEQEHPQEGRPQQQEQGGEARQEQQGQQAP, EATC…RGPL, and GSGK…EEDW. Composition is skewed to low complexity over residues 88–109, 156–173, and 385–397; these read GRPQQQEQGGEARQEQQGQQAP, AKAVARGPRGAGTARGPL, and QQLGEQPGEQPGG. Coiled coils occupy residues 634–732, 799–833, and 876–903; these read TDEL…KTKD, TEKLLNKNNKLMEENAELRRQLELSKQTEEELARR, and LHLAQLQLEEKSAEADALRERLESKTAE. Disordered regions lie at residues 936–990, 1011–1072, and 1168–1206; these read TTTN…DELS, LSHG…GATS, and PWGKRSEQQPLTTTKHSGTFLRKGNGPSNNTGSRGSLKV. Low complexity-rich tracts occupy residues 951–973 and 1014–1035; these read AGADAAGGSRSGSPTPPGASSSA and GPLSQSSPAPLSAGGMGSALAG. Gly residues-rich tracts occupy residues 1037–1046 and 1058–1067; these read WGPGSPGGSR and SAGGMGGPQG. Polar residues-rich tracts occupy residues 1175–1184 and 1193–1206; these read QQPLTTTKHS and GPSNNTGSRGSLKV.

The protein belongs to the CFAP157 family.

The protein resides in the cell projection. Its subcellular location is the cilium. It localises to the flagellum. The chain is Cilia- and flagella-associated protein 157 from Chlamydomonas reinhardtii (Chlamydomonas smithii).